A 1057-amino-acid polypeptide reads, in one-letter code: Carbamoyl phosphate synthase large chain (1057 aa).

Residues 1-401 (MPKNKDINTI…SLLKAIRSLE (401 aa)) form a carboxyphosphate synthetic domain region. ATP contacts are provided by R129, R169, G175, G176, K208, I210, E215, G241, I242, H243, Q284, and E298. The region spanning 133–327 (RSLMNELDVP…IAKLAAKIAV (195 aa)) is the ATP-grasp 1 domain. Mg(2+) is bound by residues Q284, E298, and N300. The Mn(2+) site is built by Q284, E298, and N300. Positions 402–546 (YGVHHLGLPN…YGTYERDNES (145 aa)) are oligomerization domain. The tract at residues 547 to 929 (VVTDKEKVIV…ALFKGLTASG (383 aa)) is carbamoyl phosphate synthetic domain. Positions 671 to 861 (EALLNKIDVP…MAQLAMRAIL (191 aa)) constitute an ATP-grasp 2 domain. The ATP site is built by R707, R746, L748, E752, G777, V778, H779, S780, Q820, and E832. 3 residues coordinate Mg(2+): Q820, E832, and N834. The Mn(2+) site is built by Q820, E832, and N834. The MGS-like domain maps to 930 to 1057 (VEVKDHGTVL…ESMSFTMKQM (128 aa)). Residues 930–1057 (VEVKDHGTVL…ESMSFTMKQM (128 aa)) are allosteric domain.

The protein belongs to the CarB family. Composed of two chains; the small (or glutamine) chain promotes the hydrolysis of glutamine to ammonia, which is used by the large (or ammonia) chain to synthesize carbamoyl phosphate. Tetramer of heterodimers (alpha,beta)4. Mg(2+) serves as cofactor. It depends on Mn(2+) as a cofactor.

It catalyses the reaction hydrogencarbonate + L-glutamine + 2 ATP + H2O = carbamoyl phosphate + L-glutamate + 2 ADP + phosphate + 2 H(+). The catalysed reaction is hydrogencarbonate + NH4(+) + 2 ATP = carbamoyl phosphate + 2 ADP + phosphate + 2 H(+). It participates in amino-acid biosynthesis; L-arginine biosynthesis; carbamoyl phosphate from bicarbonate: step 1/1. The protein operates within pyrimidine metabolism; UMP biosynthesis via de novo pathway; (S)-dihydroorotate from bicarbonate: step 1/3. Its function is as follows. Large subunit of the glutamine-dependent carbamoyl phosphate synthetase (CPSase). CPSase catalyzes the formation of carbamoyl phosphate from the ammonia moiety of glutamine, carbonate, and phosphate donated by ATP, constituting the first step of 2 biosynthetic pathways, one leading to arginine and/or urea and the other to pyrimidine nucleotides. The large subunit (synthetase) binds the substrates ammonia (free or transferred from glutamine from the small subunit), hydrogencarbonate and ATP and carries out an ATP-coupled ligase reaction, activating hydrogencarbonate by forming carboxy phosphate which reacts with ammonia to form carbamoyl phosphate. In Staphylococcus carnosus (strain TM300), this protein is Carbamoyl phosphate synthase large chain.